The following is a 136-amino-acid chain: Large ribosomal subunit protein uL16 (136 aa).

The protein belongs to the universal ribosomal protein uL16 family. Part of the 50S ribosomal subunit.

In terms of biological role, binds 23S rRNA and is also seen to make contacts with the A and possibly P site tRNAs. The polypeptide is Large ribosomal subunit protein uL16 (Ruthia magnifica subsp. Calyptogena magnifica).